We begin with the raw amino-acid sequence, 313 residues long: 4-hydroxy-3-methylbut-2-enyl diphosphate reductase (313 aa).

C12 is a binding site for [4Fe-4S] cluster. 2 residues coordinate (2E)-4-hydroxy-3-methylbut-2-enyl diphosphate: H41 and H74. 2 residues coordinate dimethylallyl diphosphate: H41 and H74. Positions 41 and 74 each coordinate isopentenyl diphosphate. C96 is a [4Fe-4S] cluster binding site. H124 contacts (2E)-4-hydroxy-3-methylbut-2-enyl diphosphate. Residue H124 participates in dimethylallyl diphosphate binding. Residue H124 participates in isopentenyl diphosphate binding. The Proton donor role is filled by E126. T164 serves as a coordination point for (2E)-4-hydroxy-3-methylbut-2-enyl diphosphate. C194 contributes to the [4Fe-4S] cluster binding site. (2E)-4-hydroxy-3-methylbut-2-enyl diphosphate-binding residues include S222, S223, N224, and S266. Dimethylallyl diphosphate contacts are provided by S222, S223, N224, and S266. Isopentenyl diphosphate-binding residues include S222, S223, N224, and S266.

This sequence belongs to the IspH family. It depends on [4Fe-4S] cluster as a cofactor.

It carries out the reaction isopentenyl diphosphate + 2 oxidized [2Fe-2S]-[ferredoxin] + H2O = (2E)-4-hydroxy-3-methylbut-2-enyl diphosphate + 2 reduced [2Fe-2S]-[ferredoxin] + 2 H(+). It catalyses the reaction dimethylallyl diphosphate + 2 oxidized [2Fe-2S]-[ferredoxin] + H2O = (2E)-4-hydroxy-3-methylbut-2-enyl diphosphate + 2 reduced [2Fe-2S]-[ferredoxin] + 2 H(+). The protein operates within isoprenoid biosynthesis; dimethylallyl diphosphate biosynthesis; dimethylallyl diphosphate from (2E)-4-hydroxy-3-methylbutenyl diphosphate: step 1/1. It functions in the pathway isoprenoid biosynthesis; isopentenyl diphosphate biosynthesis via DXP pathway; isopentenyl diphosphate from 1-deoxy-D-xylulose 5-phosphate: step 6/6. In terms of biological role, catalyzes the conversion of 1-hydroxy-2-methyl-2-(E)-butenyl 4-diphosphate (HMBPP) into a mixture of isopentenyl diphosphate (IPP) and dimethylallyl diphosphate (DMAPP). Acts in the terminal step of the DOXP/MEP pathway for isoprenoid precursor biosynthesis. This is 4-hydroxy-3-methylbut-2-enyl diphosphate reductase from Burkholderia pseudomallei (strain 1026b).